Here is a 416-residue protein sequence, read N- to C-terminus: cAMP-dependent protein kinase type II-beta regulatory subunit (416 aa).

The tract at residues S2–L151 is dimerization and phosphorylation. Residues H53–G97 are disordered. A Phosphothreonine modification is found at T69. S83, S85, and S112 each carry phosphoserine. 3',5'-cyclic AMP contacts are provided by residues L152–P273, E221, R230, F274–A416, E350, and R359.

The protein belongs to the cAMP-dependent kinase regulatory chain family. In terms of assembly, the inactive form of the enzyme is composed of two regulatory chains and two catalytic chains. Activation by cAMP produces two active catalytic monomers and a regulatory dimer that binds four cAMP molecules. Interacts with PRKACA and PRKACB. Interacts with the phosphorylated form of PJA2. Forms a complex composed of PRKAR2B, GSK3B and GSKIP through GSKIP interaction; facilitates PKA-induced phosphorylation and regulates GSK3B activity. In terms of processing, phosphorylated by the activated catalytic chain. In terms of tissue distribution, four types of regulatory chains are found: I-alpha, I-beta, II-alpha, and II-beta. Their expression varies among tissues and is in some cases constitutive and in others inducible. Brain. Present in a few pyramidal neurons and mostly in mossy fibers. Colocalizes with PJA2 in dentate granule cells and at postsynaptic sites of primary hippocampal neurons.

The protein localises to the cytoplasm. The protein resides in the cell membrane. Its function is as follows. Regulatory subunit of the cAMP-dependent protein kinases involved in cAMP signaling in cells. Type II regulatory chains mediate membrane association by binding to anchoring proteins, including the MAP2 kinase. The sequence is that of cAMP-dependent protein kinase type II-beta regulatory subunit (Prkar2b) from Rattus norvegicus (Rat).